Consider the following 494-residue polypeptide: MTAAVTANVVTLPAAEPAKAVRDTRPLRLITCGSVDDGKSTLIGRLLWDTKAVKEDQAATLQRDSTGKQNDLGLPDFALLLDGLQAEREQGITIDVAYRYFSTDNRSFIVADTPGHEQYTRNMATGASTADLAILLIDARLGILEQTRRHATIASLLGIKQFVLAVNKIDLTNYDRAGFEKIAHDFREFALSLGVKQITAIPMSALKGENVVYSGQAAMPWYNGPTLVETLELATVRSAQSVGFRLSVQRVSRPGESFRGYQGTVAGGSVKPGDSVMILPSGMVANVSKIVTFDLVRNAAVAGDAITLVLDRQVDVSRGDMIVAIDSQPQSGLAFDAQIVALQPEGIEPGKRYWLKSGSRRQRVQVQPIAQLELKTGAWAPAQALWMNAIGKVRLSFDEAAVFDPYDQNRSTGSFILIDPDSNNTIAGGMITGKRTDLGGIHKEGQRVLLSLPADLADQIMASELFASRRDETEVRRVTAAQAADIWANAASDI.

The tr-type G domain occupies 24–240 (TRPLRLITCG…LELATVRSAQ (217 aa)). Residues 33–40 (GSVDDGKS) form a G1 region. 33–40 (GSVDDGKS) lines the GTP pocket. The interval 91-95 (GITID) is G2. Positions 112-115 (DTPG) are G3. Residues 112-116 (DTPGH) and 167-170 (NKID) contribute to the GTP site. Positions 167–170 (NKID) are G4. Residues 204–206 (SAL) are G5.

It belongs to the TRAFAC class translation factor GTPase superfamily. Classic translation factor GTPase family. CysN/NodQ subfamily. Heterodimer composed of CysD, the smaller subunit, and CysN.

The catalysed reaction is sulfate + ATP + H(+) = adenosine 5'-phosphosulfate + diphosphate. The protein operates within sulfur metabolism; hydrogen sulfide biosynthesis; sulfite from sulfate: step 1/3. With CysD forms the ATP sulfurylase (ATPS) that catalyzes the adenylation of sulfate producing adenosine 5'-phosphosulfate (APS) and diphosphate, the first enzymatic step in sulfur assimilation pathway. APS synthesis involves the formation of a high-energy phosphoric-sulfuric acid anhydride bond driven by GTP hydrolysis by CysN coupled to ATP hydrolysis by CysD. This chain is Sulfate adenylyltransferase subunit 1, found in Rhizobium rhizogenes (strain K84 / ATCC BAA-868) (Agrobacterium radiobacter).